The sequence spans 168 residues: Photosystem I assembly protein Ycf3 (168 aa).

3 TPR repeats span residues 35 to 68, 72 to 105, and 120 to 153; these read AFTY…EIDP, SYIL…NPFL, and GEQA…TPGN.

This sequence belongs to the Ycf3 family.

The protein resides in the plastid. The protein localises to the chloroplast thylakoid membrane. Essential for the assembly of the photosystem I (PSI) complex. May act as a chaperone-like factor to guide the assembly of the PSI subunits. This is Photosystem I assembly protein Ycf3 from Solanum lycopersicum (Tomato).